A 111-amino-acid chain; its full sequence is uncharacterized protein (111 aa).

The helical transmembrane segment at 81–101 (YFFLLFYVSFPHIFLGLFFFI) threads the bilayer.

The protein localises to the membrane. This is an uncharacterized protein from Schizosaccharomyces pombe (strain 972 / ATCC 24843) (Fission yeast).